Reading from the N-terminus, the 100-residue chain is Small cysteine and glycine repeat-containing protein 3 (100 aa).

The interval 4–82 (CGCGSCGGCG…RRTCRSCGCG (79 aa)) is 13 X 2 AA repeats of CG.

It belongs to the KRTAP type 28 family.

In terms of biological role, in the hair cortex, hair keratin intermediate filaments are embedded in an interfilamentous matrix, consisting of hair keratin-associated proteins (KRTAP), which are essential for the formation of a rigid and resistant hair shaft through their extensive disulfide bond cross-linking with abundant cysteine residues of hair keratins. The matrix proteins include the high-sulfur and high-glycine-tyrosine keratins. The chain is Small cysteine and glycine repeat-containing protein 3 from Homo sapiens (Human).